The primary structure comprises 251 residues: Hydroxyacylglutathione hydrolase (251 aa).

Histidine 53, histidine 55, aspartate 57, histidine 58, histidine 110, aspartate 127, and histidine 165 together coordinate Zn(2+).

This sequence belongs to the metallo-beta-lactamase superfamily. Glyoxalase II family. As to quaternary structure, monomer. Requires Zn(2+) as cofactor.

It catalyses the reaction an S-(2-hydroxyacyl)glutathione + H2O = a 2-hydroxy carboxylate + glutathione + H(+). Its pathway is secondary metabolite metabolism; methylglyoxal degradation; (R)-lactate from methylglyoxal: step 2/2. Its function is as follows. Thiolesterase that catalyzes the hydrolysis of S-D-lactoyl-glutathione to form glutathione and D-lactic acid. The polypeptide is Hydroxyacylglutathione hydrolase (Escherichia coli O6:K15:H31 (strain 536 / UPEC)).